A 127-amino-acid polypeptide reads, in one-letter code: Methylglyoxal synthase (127 aa).

One can recognise an MGS-like domain in the interval 1–127; the sequence is MEKKIALIAH…IKGLESLILR (127 aa). Substrate contacts are provided by residues histidine 10, lysine 14, 36 to 39, and 56 to 57; these read TGTT and SG. Aspartate 62 serves as the catalytic Proton donor/acceptor. Position 89 (histidine 89) interacts with substrate.

This sequence belongs to the methylglyoxal synthase family.

It carries out the reaction dihydroxyacetone phosphate = methylglyoxal + phosphate. In terms of biological role, catalyzes the formation of methylglyoxal from dihydroxyacetone phosphate. The protein is Methylglyoxal synthase of Borreliella afzelii (strain PKo) (Borrelia afzelii).